A 291-amino-acid polypeptide reads, in one-letter code: Pituitary-specific positive transcription factor 1 (291 aa).

The 9aaTAD signature appears at 5-13; sequence AFTSADTFI. Positions 124 to 198 constitute a POU-specific domain; sequence MDSPEIRELE…ILSKWLEEAE (75 aa). Residues 214–273 constitute a DNA-binding region (homeobox); that stretch reads KRKRRTTISIAAKDALERHFGEQNKPSSQEIMRMAEELNLEKEVVRVWFCNRRQREKRVK.

The protein belongs to the POU transcription factor family. Class-1 subfamily. Interacts with PITX1. Interacts with LHX3. Interacts with ELK1.

It localises to the nucleus. In terms of biological role, transcription factor involved in the specification of the lactotrope, somatotrope, and thyrotrope phenotypes in the developing anterior pituitary. Specifically binds to the consensus sequence 5'-TAAAT-3'. Activates growth hormone and prolactin genes. The polypeptide is Pituitary-specific positive transcription factor 1 (POU1F1) (Homo sapiens (Human)).